We begin with the raw amino-acid sequence, 130 residues long: Small ribosomal subunit protein uS9 (130 aa).

Belongs to the universal ribosomal protein uS9 family.

The sequence is that of Small ribosomal subunit protein uS9 from Pseudomonas syringae pv. tomato (strain ATCC BAA-871 / DC3000).